Consider the following 201-residue polypeptide: Recombination protein RecR (201 aa).

The C4-type zinc-finger motif lies at 60-75; that stretch reads CSCCGNVDTSDPCTIC. The Toprim domain occupies 83–178; sequence TTLIVVEDVS…RVTRLAHGVP (96 aa).

It belongs to the RecR family.

May play a role in DNA repair. It seems to be involved in an RecBC-independent recombinational process of DNA repair. It may act with RecF and RecO. The chain is Recombination protein RecR from Brucella anthropi (strain ATCC 49188 / DSM 6882 / CCUG 24695 / JCM 21032 / LMG 3331 / NBRC 15819 / NCTC 12168 / Alc 37) (Ochrobactrum anthropi).